Reading from the N-terminus, the 272-residue chain is Cell division protein FtsQ (272 aa).

Residues 1-43 (MEYNPPNTRERIAARRQRLRQPSSEPAIPGWRRRFIDGLQSGR) lie on the Cytoplasmic side of the membrane. The helical transmembrane segment at 44-64 (IVSGAVFVVSCLALFYVLFSS) threads the bilayer. The Extracellular segment spans residues 65–272 (QFRVQTVEVV…FYQNRTDGRS (208 aa)). One can recognise a POTRA domain in the interval 66-133 (FRVQTVEVVG…DRARIVIVER (68 aa)).

Belongs to the FtsQ/DivIB family. FtsQ subfamily.

The protein localises to the cell membrane. Its function is as follows. Essential cell division protein. The protein is Cell division protein FtsQ of Chloroflexus aggregans (strain MD-66 / DSM 9485).